We begin with the raw amino-acid sequence, 244 residues long: Phosphoadenosine 5'-phosphosulfate reductase (244 aa).

C239 serves as the catalytic Nucleophile; cysteine thiosulfonate intermediate.

Belongs to the PAPS reductase family. CysH subfamily.

It localises to the cytoplasm. It carries out the reaction [thioredoxin]-disulfide + sulfite + adenosine 3',5'-bisphosphate + 2 H(+) = [thioredoxin]-dithiol + 3'-phosphoadenylyl sulfate. It participates in sulfur metabolism; hydrogen sulfide biosynthesis; sulfite from sulfate: step 3/3. In terms of biological role, catalyzes the formation of sulfite from phosphoadenosine 5'-phosphosulfate (PAPS) using thioredoxin as an electron donor. The protein is Phosphoadenosine 5'-phosphosulfate reductase of Salmonella dublin (strain CT_02021853).